The sequence spans 157 residues: Oocyte zinc finger protein XlCOF2 (157 aa).

5 consecutive C2H2-type zinc fingers follow at residues 6-28 (FTCT…MRIH), 34-56 (YSCA…QKNP), 79-101 (FTCT…QRLH), 107-129 (FSCA…QNTH), and 135-157 (FTCT…QKIH).

Belongs to the krueppel C2H2-type zinc-finger protein family.

The protein localises to the nucleus. May be involved in transcriptional regulation. This chain is Oocyte zinc finger protein XlCOF2, found in Xenopus laevis (African clawed frog).